The sequence spans 396 residues: Elongation factor Tu 2 (396 aa).

The region spanning 10-206 (KLHVNVGTIG…ALDTFIPDPT (197 aa)) is the tr-type G domain. The interval 19-26 (GHVDHGKT) is G1. 19-26 (GHVDHGKT) contributes to the GTP binding site. A Mg(2+)-binding site is contributed by threonine 26. Residues 60–64 (GITIS) form a G2 region. Positions 81-84 (DCPG) are G3. GTP contacts are provided by residues 81 to 85 (DCPGH) and 136 to 139 (NKAD). Residues 136–139 (NKAD) are G4. The tract at residues 174 to 176 (SAR) is G5.

It belongs to the TRAFAC class translation factor GTPase superfamily. Classic translation factor GTPase family. EF-Tu/EF-1A subfamily. Monomer.

Its subcellular location is the cytoplasm. The catalysed reaction is GTP + H2O = GDP + phosphate + H(+). Its function is as follows. GTP hydrolase that promotes the GTP-dependent binding of aminoacyl-tRNA to the A-site of ribosomes during protein biosynthesis. This is Elongation factor Tu 2 from Xanthomonas campestris pv. campestris (strain 8004).